A 173-amino-acid chain; its full sequence is Lens fiber membrane intrinsic protein (173 aa).

At 1-3 (MYS) the chain is on the cytoplasmic side. A helical transmembrane segment spans residues 4–24 (FMGGGLFCAWVGTILLVVATA). Over 25–66 (TDHWMQYRLSGAFAHQGLWRYCLGTKCYLQTESIAYWNATRA) the chain is Extracellular. Trp-43 and Trp-61 each carry a C-linked (Man) tryptophan; partial glycan. A helical transmembrane segment spans residues 67–87 (FMILSSLCATSGIIMGIVAFA). At 88-98 (QQPTFTRLSRP) the chain is on the cytoplasmic side. A helical membrane pass occupies residues 99-119 (FSAGIMFFASTFFVLLALAIY). The Extracellular portion of the chain corresponds to 120 to 140 (TGVTVSFLGRRFGDWRFSWSY). A helical transmembrane segment spans residues 141-161 (ILGWVALLMTFFAGIFYMCAY). Over 162–173 (RMHECRRLSTPR) the chain is Cytoplasmic. Ser-170 carries the phosphoserine modification. Position 171 is a phosphothreonine (Thr-171).

The protein belongs to the PMP-22/EMP/MP20 family. Seems to be associated with itself or another lens membrane component via disulfide bonds. Post-translationally, predominantly monophosphorylated on Ser-170. Only about 15% diphosphorylated on both Ser-170 and Thr-171. In terms of processing, C-glycosylated. Trp-43 is more extensively C-glycosylated than Trp-61. C-glycosylation may be involved in membrane trafficking. Eye lens specific.

The protein localises to the membrane. In terms of biological role, present in the thicker 16-17 nm junctions of mammalian lens fiber cells, where it may contribute to cell junctional organization. Acts as a receptor for calmodulin. May play an important role in both lens development and cataractogenesis. In Bos taurus (Bovine), this protein is Lens fiber membrane intrinsic protein (LIM2).